We begin with the raw amino-acid sequence, 96 residues long: Large ribosomal subunit protein bL25 (96 aa).

The protein belongs to the bacterial ribosomal protein bL25 family. Part of the 50S ribosomal subunit; part of the 5S rRNA/L5/L18/L25 subcomplex. Contacts the 5S rRNA. Binds to the 5S rRNA independently of L5 and L18.

In terms of biological role, this is one of the proteins that binds to the 5S RNA in the ribosome where it forms part of the central protuberance. The sequence is that of Large ribosomal subunit protein bL25 from Francisella tularensis subsp. holarctica (strain FTNF002-00 / FTA).